The chain runs to 559 residues: Protein pp71 (559 aa).

S-nitrosocysteine; by host is present on Cys-218. Thr-223 is modified (phosphothreonine). 2 disordered regions span residues 404–440 and 530–559; these read EFLP…TPLS and SSTL…RPRI. Over residues 415 to 430 the composition is skewed to acidic residues; the sequence is TEEEEEEEEEDDEDDL. Composition is skewed to low complexity over residues 431-440 and 543-559; these read SSTPTPTPLS and PIST…RPRI.

This sequence belongs to the herpesviridae pp71 family. As to quaternary structure, interacts with the host protein DAXX; this interaction takes place at ND10 and induces the reversal of DAXX-mediated repression of viral transcription. Interacts with UL35. Interacts with host TMEM173/STING1; this interaction inhibits the cGAS/STING pathway. Interacts with host RB1; this interaction mediates RB1 proteasomal degradation. Post-translationally, S-nitrosylation limits ability to undermine the cGAS/STING antiviral pathway.

Its subcellular location is the virion tegument. The protein localises to the host nucleus. It localises to the host endoplasmic reticulum. Its function is as follows. Stimulates viral immediate-early (IE) transcription. Plays a role in the inhibition of the host innate repsonse by targeting STING1 and thus the cGAS-STING pathway. Also counteracts host DAXX-mediated repression of viral transcription. Displaces a DAXX-binding protein, ATRX, from nuclear domain 10 sites (ND10) shortly after infection. Increases the basal level of SUMOylated DAXX in infected cells. Stimulates quiescent cells to re-enter the cell cycle, proceed through G1 and enter the S phase. Interacts with hypophosphorylated forms of RB1 and induces their degradation by the proteasome without involving ubiquitin conjugation. In Homo sapiens (Human), this protein is Protein pp71 (UL82).